Consider the following 186-residue polypeptide: LSM12 homolog B (186 aa).

The region spanning 1–74 is the Sm domain; the sequence is MSSLAPCFTV…CMDIEIVKEA (74 aa). One can recognise an AD domain in the interval 84-186; sequence EPIDLPMIRE…VVQNFCSKQF (103 aa).

The protein belongs to the LSM12 family. Interacts with Sbat; along with Sbat and Vlet, may form an accessory subcomplex involved in SMN complex function.

Its function is as follows. May have an accessory function in the survival motor neuron (SMN) complex. The chain is LSM12 homolog B from Drosophila melanogaster (Fruit fly).